A 260-amino-acid polypeptide reads, in one-letter code: Tryptophan synthase alpha chain (260 aa).

Residues Glu52 and Asp63 each act as proton acceptor in the active site.

Belongs to the TrpA family. In terms of assembly, tetramer of two alpha and two beta chains.

It carries out the reaction (1S,2R)-1-C-(indol-3-yl)glycerol 3-phosphate + L-serine = D-glyceraldehyde 3-phosphate + L-tryptophan + H2O. The protein operates within amino-acid biosynthesis; L-tryptophan biosynthesis; L-tryptophan from chorismate: step 5/5. The alpha subunit is responsible for the aldol cleavage of indoleglycerol phosphate to indole and glyceraldehyde 3-phosphate. The chain is Tryptophan synthase alpha chain from Streptococcus thermophilus (strain ATCC BAA-250 / LMG 18311).